Reading from the N-terminus, the 435-residue chain is tRNA(Ile)-lysidine synthase (435 aa).

An ATP-binding site is contributed by 23 to 28 (SGGMDS).

It belongs to the tRNA(Ile)-lysidine synthase family.

The protein localises to the cytoplasm. It catalyses the reaction cytidine(34) in tRNA(Ile2) + L-lysine + ATP = lysidine(34) in tRNA(Ile2) + AMP + diphosphate + H(+). Functionally, ligates lysine onto the cytidine present at position 34 of the AUA codon-specific tRNA(Ile) that contains the anticodon CAU, in an ATP-dependent manner. Cytidine is converted to lysidine, thus changing the amino acid specificity of the tRNA from methionine to isoleucine. This is tRNA(Ile)-lysidine synthase from Xanthomonas campestris pv. campestris (strain 8004).